The primary structure comprises 206 residues: Platelet glycoprotein Ib beta chain (206 aa).

The signal sequence occupies residues M1–C26. 2 disulfides stabilise this stretch: C26–C32 and C30–C39. The LRRNT domain occupies P27 to P55. The Extracellular portion of the chain corresponds to P27 to A150. The LRR repeat unit spans residues L60 to R83. In terms of domain architecture, LRRCT spans N89–P143. 2 disulfides stabilise this stretch: C93/C118 and C95/C141. The helical transmembrane segment at L151 to L171 threads the bilayer. The Cytoplasmic segment spans residues L172–S206. Phosphoserine is present on S186. S191 bears the Phosphoserine; by PKA mark. T193 is modified (phosphothreonine). Phosphoserine is present on S200.

In terms of assembly, two GP-Ib beta are disulfide-linked to one GP-Ib alpha. GP-IX is complexed with the GP-Ib heterodimer via a non covalent linkage. Interacts with TRAF4.

The protein resides in the membrane. In terms of biological role, gp-Ib, a surface membrane protein of platelets, participates in the formation of platelet plugs by binding to von Willebrand factor, which is already bound to the subendothelium. The protein is Platelet glycoprotein Ib beta chain (Gp1bb) of Rattus norvegicus (Rat).